The primary structure comprises 155 residues: MPKFIEGKLDAKGLRFGIIVGRFNSFIGERLLEGALDALIRHGADDKNIEVARVPGAFEIPLATKKMAATGKYDAIICLGAVIRGATPHFDYVAAEVSKGVAHVSLDSGVPVAFGVLTTDTIEQAVERAGTKAGNKGFDSAMTAIETANLFKGIK.

5-amino-6-(D-ribitylamino)uracil contacts are provided by residues Phe23, 57–59 (AFE), and 81–83 (AVI). 86-87 (AT) is a (2S)-2-hydroxy-3-oxobutyl phosphate binding site. Catalysis depends on His89, which acts as the Proton donor. 5-amino-6-(D-ribitylamino)uracil is bound at residue Phe114. A (2S)-2-hydroxy-3-oxobutyl phosphate-binding site is contributed by Arg128.

Belongs to the DMRL synthase family.

The enzyme catalyses (2S)-2-hydroxy-3-oxobutyl phosphate + 5-amino-6-(D-ribitylamino)uracil = 6,7-dimethyl-8-(1-D-ribityl)lumazine + phosphate + 2 H2O + H(+). Its pathway is cofactor biosynthesis; riboflavin biosynthesis; riboflavin from 2-hydroxy-3-oxobutyl phosphate and 5-amino-6-(D-ribitylamino)uracil: step 1/2. Its function is as follows. Catalyzes the formation of 6,7-dimethyl-8-ribityllumazine by condensation of 5-amino-6-(D-ribitylamino)uracil with 3,4-dihydroxy-2-butanone 4-phosphate. This is the penultimate step in the biosynthesis of riboflavin. This Geotalea daltonii (strain DSM 22248 / JCM 15807 / FRC-32) (Geobacter daltonii) protein is 6,7-dimethyl-8-ribityllumazine synthase.